Consider the following 91-residue polypeptide: Uteroglobin (91 aa).

The signal sequence occupies residues 1 to 21 (MKLAITITLAILALCCSPASA).

This sequence belongs to the secretoglobin family. In terms of assembly, antiparallel homodimer; disulfide-linked. Interaction with LMBR1L is controversial. As to expression, club cells (nonciliated cells of the surface epithelium of the pulmonary airways). Expressed in lung, uterus, and prostate.

It localises to the secreted. Its function is as follows. Binds phosphatidylcholine, phosphatidylinositol, polychlorinated biphenyls (PCB) and weakly progesterone, potent inhibitor of phospholipase A2. This Equus caballus (Horse) protein is Uteroglobin (SCGB1A1).